The primary structure comprises 469 residues: Sulfate adenylyltransferase subunit 1 (469 aa).

Residues 22-236 form the tr-type G domain; the sequence is KDMLRFLTCG…TLENIEIGND (215 aa). The segment at 31 to 38 is G1; that stretch reads GSVDDGKS. A GTP-binding site is contributed by 31–38; the sequence is GSVDDGKS. Residues 89–93 are G2; the sequence is GITID. Residues 110–113 are G3; sequence DTPG. Residues 110-114 and 165-168 contribute to the GTP site; these read DTPGH and NKMD. Residues 165-168 form a G4 region; that stretch reads NKMD. The G5 stretch occupies residues 202–204; the sequence is SAL.

It belongs to the TRAFAC class translation factor GTPase superfamily. Classic translation factor GTPase family. CysN/NodQ subfamily. Heterodimer composed of CysD, the smaller subunit, and CysN.

It catalyses the reaction sulfate + ATP + H(+) = adenosine 5'-phosphosulfate + diphosphate. The protein operates within sulfur metabolism; hydrogen sulfide biosynthesis; sulfite from sulfate: step 1/3. In terms of biological role, with CysD forms the ATP sulfurylase (ATPS) that catalyzes the adenylation of sulfate producing adenosine 5'-phosphosulfate (APS) and diphosphate, the first enzymatic step in sulfur assimilation pathway. APS synthesis involves the formation of a high-energy phosphoric-sulfuric acid anhydride bond driven by GTP hydrolysis by CysN coupled to ATP hydrolysis by CysD. This is Sulfate adenylyltransferase subunit 1 from Pseudoalteromonas atlantica (strain T6c / ATCC BAA-1087).